We begin with the raw amino-acid sequence, 148 residues long: UPF0178 protein LPC_0108 (148 aa).

It belongs to the UPF0178 family.

The sequence is that of UPF0178 protein LPC_0108 from Legionella pneumophila (strain Corby).